Consider the following 437-residue polypeptide: Sodium/bile acid cotransporter 4 (437 aa).

Residues 1 to 103 (MDGLDNTTRL…PPFWDTPLNH (103 aa)) are Extracellular-facing. N-linked (GlcNAc...) asparagine glycosylation is found at N6, N20, and N26. The interval 16–84 (LLPDNLTLSP…GGVAGQDSST (69 aa)) is disordered. Over residues 21-50 (LTLSPNASSTSASTLSPLPVTSSPSPGLSL) the composition is skewed to low complexity. Residues 104 to 124 (GLNVFVGAALCITMLGLGCTV) traverse the membrane as a helical segment. Residues 125-140 (DVNHFGAHVRRPVGAL) lie on the Cytoplasmic side of the membrane. The helical transmembrane segment at 141 to 161 (LAALCQFGFLPLLAFLLALAF) threads the bilayer. Residues 162-197 (KLDEVAAVAVLLCGCCPGGNLSNLMSLLVDGDMNLS) are Extracellular-facing. N-linked (GlcNAc...) asparagine glycans are attached at residues N181 and N195. Residues 198-218 (IIMTISSTLLALVLMPLCLWI) form a helical membrane-spanning segment. Topologically, residues 219–233 (YSRAWINTPLVQLLP) are cytoplasmic. Residues 234-254 (LGAVTLTLCSTLIPIGLGVFI) traverse the membrane as a helical segment. Residues 255-267 (RYKYNRVADYIVK) are Extracellular-facing. Residues 268-288 (VSLCSLLVTLVVLFIMTGTML) traverse the membrane as a helical segment. The Cytoplasmic portion of the chain corresponds to 289–291 (GPE). A helical membrane pass occupies residues 292-312 (LLASIPAAVYVVAIFMPLAGY). Topologically, residues 313–360 (ASGYGLATLFHLPPNCKRTVCLETGSQNVQLCTAILKLAFPPRFIGSM) are extracellular. The helical transmembrane segment at 361–381 (YMFPLLYALFQSAEAGVFVLI) threads the bilayer. The Cytoplasmic portion of the chain corresponds to 382 to 437 (YKMYGSEILHKREALDEDDDTDISYKKLKEEELADTSYGTVGTDDLVLMETTQTSL).

It belongs to the bile acid:sodium symporter (BASS) (TC 2.A.28) family. Post-translationally, activated following N-terminal proteolytic cleavage by thrombin and/or proteases. As to expression, mainly expressed in the central nervous system cholinergic neurons. Expressed (at protein level) in motor regions of the spinal cord and rhombencephalon, in mesopontine cholinergic neurons, the medial habenula, cholinergic areas of the forebrain, and the gut myenteric plexus.

The protein localises to the cell membrane. Its function is as follows. Transporter for bile acids. This is Sodium/bile acid cotransporter 4 (Slc10a4) from Rattus norvegicus (Rat).